The following is a 945-amino-acid chain: MSNKKADSKPQAKYPVNLLDTPFPMRGDLPKREPQWVKEWEERGIYEKIRAASKGRPKFILHDGPPYANGDIHLGHAVNKILKDIVVKSRNMAGFDAPYVPGWDCHGMPIEIQIEKQFGKSLPAAEVMSKARAYATEQIEKQKVGFKRLGVLGDWANPYKTMNFVNEAEEIRALGKIIEKGYVYRGLKPVNWCFDCGSALAEAEVEYKDRTDPTIDVMFAFAEPEKTAQAFGLPALPRADGGIVIWTTTPWTIPANQALNLHPEIVYALVDTERGLLIIAEERVEACMADFKLTGRIVATAPGVKLANLRFHHPLASAHPGYKRTAPVYLGDYVTTDTGTGVVHSSPAYGIEDFVSCKSHGMTDSDIINPVMGDGRYIESLPLFGGLSIWDANPKVVEALRAAGSLLRSEKYTHSYMHCWRHKTPIIYRATSQWFAGMDVTPHAGGKTLRETALEGIDATAFYPSWGKQRLFSMIANRPDWTLSRQRQWGVPMAFFVHKETGELHPRTLELLEEVAKRVEQSGIEAWQSLDPRELIGDDANLYEKNRDTLDVWFDSGTTHWHVLRGSHKDQLQFPADLYLEGSDQHRGWFHSSLLTASMIDGRAPYKGLLTHGFTVDGEGRKMSKSLGNGIDPHEVANRLGAEIIRLWIASTDYSGELAISEEILKRVTEGYRRIRNTLRFLLANLSDFDFAQHAVPVDEWLEIDRYAVAFSAQLQTELLGHYEKYEFHPVVAKLQTYCSEDLGGFYLDVLKDRLYTSAADSRARRSAQTALYHLTQGLLRVLAPFLSFTAEEAWKVFQPASDTVFTETYYAYPEVAGAAALIEKWALLRDVRGNVTKALEEARTANRIGSSLQAEVAVHASGARYDALTSLGDDLKFVLITSAASVVKVDDEAHESVDVAASKYQKCERCWHYREDVGAHAEHPTLCGRCFSNLFENGEIRSAA.

Positions 66–76 (PYANGDIHLGH) match the 'HIGH' region motif. Glu-581 contributes to the L-isoleucyl-5'-AMP binding site. Positions 622–626 (KMSKS) match the 'KMSKS' region motif. An ATP-binding site is contributed by Lys-625. Cys-908, Cys-911, Cys-928, and Cys-931 together coordinate Zn(2+).

Belongs to the class-I aminoacyl-tRNA synthetase family. IleS type 1 subfamily. Monomer. The cofactor is Zn(2+).

It localises to the cytoplasm. It carries out the reaction tRNA(Ile) + L-isoleucine + ATP = L-isoleucyl-tRNA(Ile) + AMP + diphosphate. In terms of biological role, catalyzes the attachment of isoleucine to tRNA(Ile). As IleRS can inadvertently accommodate and process structurally similar amino acids such as valine, to avoid such errors it has two additional distinct tRNA(Ile)-dependent editing activities. One activity is designated as 'pretransfer' editing and involves the hydrolysis of activated Val-AMP. The other activity is designated 'posttransfer' editing and involves deacylation of mischarged Val-tRNA(Ile). The sequence is that of Isoleucine--tRNA ligase from Burkholderia vietnamiensis (strain G4 / LMG 22486) (Burkholderia cepacia (strain R1808)).